The sequence spans 248 residues: Triosephosphate isomerase (248 aa).

9–11 lines the substrate pocket; it reads NWK. The Electrophile role is filled by H94. The active-site Proton acceptor is the E166. Substrate-binding positions include G172, S211, and 232-233; that span reads GG.

It belongs to the triosephosphate isomerase family. In terms of assembly, homodimer.

The protein resides in the cytoplasm. It carries out the reaction D-glyceraldehyde 3-phosphate = dihydroxyacetone phosphate. It participates in carbohydrate biosynthesis; gluconeogenesis. Its pathway is carbohydrate degradation; glycolysis; D-glyceraldehyde 3-phosphate from glycerone phosphate: step 1/1. In terms of biological role, involved in the gluconeogenesis. Catalyzes stereospecifically the conversion of dihydroxyacetone phosphate (DHAP) to D-glyceraldehyde-3-phosphate (G3P). The polypeptide is Triosephosphate isomerase (Vesicomyosocius okutanii subsp. Calyptogena okutanii (strain HA)).